The primary structure comprises 768 residues: Eukaryotic elongation factor 2 kinase (768 aa).

The span at 1–17 shows a compositional bias: polar residues; it reads MTIDTTNESDNSPTNSP. Residues 1–21 are disordered; that stretch reads MTIDTTNESDNSPTNSPGLEA. The Alpha-type protein kinase domain occupies 102–309; sequence RYSAIRKQWT…ICETMDLSNF (208 aa). 279–284 contributes to the ATP binding site; the sequence is GDGNLG. Over residues 402 to 411 the composition is skewed to acidic residues; the sequence is SEDEEDEEED. Residues 402 to 446 form a disordered region; it reads SEDEEDEEEDYPRSEKSGNSQKSRRSRMSISTRSSGDESASRPRK.

This sequence belongs to the protein kinase superfamily. Alpha-type protein kinase family. Monomer or homodimer. Interacts with cmd-1 in the presence of Ca(2+).

It carries out the reaction [translation elongation factor 2] + ATP = [translation elongation factor 2]-phosphate + ADP + H(+). With respect to regulation, calcium(2+)/calmodulin dependent activity. Undergoes calcium/calmodulin-dependent intramolecular autophosphorylation, and this results in it becoming partially calcium/calmodulin-independent. Its function is as follows. Phosphorylates elongation factor-2 (eEF-2) at two threonine residues that are conserved in all eukaryotes and are located within a GTP-binding domain. Calcium(2+)/calmodulin dependent activity. Inactivates eEF-2 by catalyzing its phosphorylation. eEF-2 catalyzes the movement of the ribosome along mRNA during translation in eukaryotic cells. This chain is Eukaryotic elongation factor 2 kinase (efk-1), found in Caenorhabditis elegans.